The sequence spans 415 residues: Gamma-glutamyl phosphate reductase (415 aa).

Belongs to the gamma-glutamyl phosphate reductase family.

It localises to the cytoplasm. The enzyme catalyses L-glutamate 5-semialdehyde + phosphate + NADP(+) = L-glutamyl 5-phosphate + NADPH + H(+). Its pathway is amino-acid biosynthesis; L-proline biosynthesis; L-glutamate 5-semialdehyde from L-glutamate: step 2/2. In terms of biological role, catalyzes the NADPH-dependent reduction of L-glutamate 5-phosphate into L-glutamate 5-semialdehyde and phosphate. The product spontaneously undergoes cyclization to form 1-pyrroline-5-carboxylate. The protein is Gamma-glutamyl phosphate reductase of Bacillus subtilis (strain 168).